A 529-amino-acid chain; its full sequence is NAD(P)H-quinone oxidoreductase chain 4 1 (529 aa).

The next 13 helical transmembrane spans lie at 4–24 (FPWL…IPFI), 36–56 (WYAL…FTNF), 91–111 (LILL…PVTL), 115–135 (LFYF…AVQD), 137–157 (LVFF…LAIW), 169–189 (FILY…AMAF), 209–229 (GFQL…LPIV), 243–263 (TAPV…YALI), 277–297 (FAPV…LTSY), 314–334 (IGFV…GAVL), 335–355 (QMVS…ATYD), 387–407 (LALP…GFAT), and 417–437 (VIVV…LLSM).

Belongs to the complex I subunit 4 family.

It is found in the cellular thylakoid membrane. It carries out the reaction a plastoquinone + NADH + (n+1) H(+)(in) = a plastoquinol + NAD(+) + n H(+)(out). The enzyme catalyses a plastoquinone + NADPH + (n+1) H(+)(in) = a plastoquinol + NADP(+) + n H(+)(out). Functionally, NDH-1 shuttles electrons from NAD(P)H, via FMN and iron-sulfur (Fe-S) centers, to quinones in the respiratory chain. The immediate electron acceptor for the enzyme in this species is believed to be plastoquinone. Couples the redox reaction to proton translocation (for every two electrons transferred, four hydrogen ions are translocated across the cytoplasmic membrane), and thus conserves the redox energy in a proton gradient. The protein is NAD(P)H-quinone oxidoreductase chain 4 1 of Thermosynechococcus vestitus (strain NIES-2133 / IAM M-273 / BP-1).